Here is a 126-residue protein sequence, read N- to C-terminus: UPF0538 protein C2orf76 homolog (126 aa).

The protein belongs to the UPF0538 family.

The polypeptide is UPF0538 protein C2orf76 homolog (Mus musculus (Mouse)).